We begin with the raw amino-acid sequence, 198 residues long: Twist-related protein 1 (198 aa).

Positions 1-18 are enriched in low complexity; sequence MMQDVSSSPVSPADDSLS. A disordered region spans residues 1 to 101; that stretch reads MMQDVSSSPV…GGGSPQSYEE (101 aa). Residues 34-43 are compositionally biased toward basic residues; sequence RGGRKRRSSR. Composition is skewed to gly residues over residues 46–64 and 79–95; these read AGGG…GGDE and GCGG…GGGS. Residues 104–155 form the bHLH domain; the sequence is TQRVMANVRERQRTQSLNEAFAALRKIIPTLPSDKLSKIQTLKLAARYIDFL. A sufficient for transactivation activity region spans residues 157–187; it reads QVLQSDELDSKMASCSYVAHERLSYAFSVWR.

As to quaternary structure, efficient DNA binding requires dimerization with another bHLH protein. Homodimer or heterodimer with E proteins such as TCF3. ID1 binds preferentially to TCF3 but does not interact efficiently with TWIST1 so ID1 levels control the amount of TCF3 available to dimerize with TWIST and thus determine the type of dimer formed.

The protein localises to the nucleus. Acts as a transcriptional regulator. Inhibits myogenesis by sequestrating E proteins, inhibiting trans-activation by MEF2, and inhibiting DNA-binding by MYOD1 through physical interaction. This interaction probably involves the basic domains of both proteins. Also represses expression of pro-inflammatory cytokines such as TNFA and IL1B. Regulates cranial suture patterning and fusion. Activates transcription as a heterodimer with E proteins. Regulates gene expression differentially, depending on dimer composition. Homodimers induce expression of FGFR2 and POSTN while heterodimers repress FGFR2 and POSTN expression and induce THBS1 expression. Heterodimerization is also required for osteoblast differentiation. Represses the activity of the circadian transcriptional activator: NPAS2-BMAL1 heterodimer. The polypeptide is Twist-related protein 1 (TWIST1) (Eulemur fulvus fulvus (Brown lemur)).